Consider the following 369-residue polypeptide: Glycolate oxidase 1 (369 aa).

The 360-residue stretch at 1 to 360 (MGEITNVMEY…TRAHIYTDAD (360 aa)) folds into the FMN hydroxy acid dehydrogenase domain. Tyr25 is a glyoxylate binding site. Residues 78–80 (PSA), Ser107, 128–130 (QLY), and Thr156 contribute to the FMN site. Tyr130 contributes to the glyoxylate binding site. A glyoxylate-binding site is contributed by Arg165. Lys231 and Ser253 together coordinate FMN. Glyoxylate is bound by residues His255 and Arg258. The active-site Proton acceptor is the His255. FMN contacts are provided by residues 286 to 290 (DGGVR) and 309 to 310 (GR). Residues 367-369 (PRL) carry the Microbody targeting signal motif.

This sequence belongs to the FMN-dependent alpha-hydroxy acid dehydrogenase family. In terms of assembly, homotetramer. Interacts with rice dwarf virus (RDV) P8. This interaction promotes viral P8 relocation to virus factories peripheral to peroxisomes. Requires FMN as cofactor.

The protein localises to the peroxisome. It carries out the reaction glycolate + O2 = glyoxylate + H2O2. It participates in photosynthesis; photorespiration; glycine from 2-phosphoglycolate: step 2/3. Catalyzes the oxidation of glycolate to glyoxylate, with a reduction of O2 to H2O2. Is a key enzyme in photorespiration in plants. Can exert a strong regulation over photosynthesis, possibly through a feed-back inhibition on Rubisco activase. Does not seem to play a role in oxalate accumulation. The chain is Glycolate oxidase 1 (GLO1) from Oryza sativa subsp. indica (Rice).